The chain runs to 693 residues: Elongation factor G (693 aa).

The 275-residue stretch at 8 to 282 folds into the tr-type G domain; sequence EKTRNIGIMA…AVIDYLPSPL (275 aa). Residues 17–24, 81–85, and 135–138 each bind GTP; these read AHVDAGKT, DTPGH, and NKMD.

This sequence belongs to the TRAFAC class translation factor GTPase superfamily. Classic translation factor GTPase family. EF-G/EF-2 subfamily.

It is found in the cytoplasm. In terms of biological role, catalyzes the GTP-dependent ribosomal translocation step during translation elongation. During this step, the ribosome changes from the pre-translocational (PRE) to the post-translocational (POST) state as the newly formed A-site-bound peptidyl-tRNA and P-site-bound deacylated tRNA move to the P and E sites, respectively. Catalyzes the coordinated movement of the two tRNA molecules, the mRNA and conformational changes in the ribosome. This is Elongation factor G from Streptococcus pneumoniae (strain CGSP14).